The sequence spans 99 residues: Small ribosomal subunit protein eS24 (99 aa).

This sequence belongs to the eukaryotic ribosomal protein eS24 family.

In Pyrococcus horikoshii (strain ATCC 700860 / DSM 12428 / JCM 9974 / NBRC 100139 / OT-3), this protein is Small ribosomal subunit protein eS24.